A 559-amino-acid chain; its full sequence is Estrogen receptor beta (559 aa).

The interval 1 to 155 (MAVACSPEKD…SSGGKADLHF (155 aa)) is modulating. A disordered region spans residues 128–148 (TSSKSARRRSQENEEGEVSSG). 2 NR C4-type zinc fingers span residues 156–176 (CAVCHDYASGYHYGVWSCEGC) and 192–216 (CPATNQCTIDKNRRKSCQACRLHKC). The nuclear receptor DNA-binding region spans 156-221 (CAVCHDYASG…RLHKCYNVGM (66 aa)). Over residues 243 to 254 (RLSSQGRTSGPS) the composition is skewed to polar residues. The tract at residues 243-269 (RLSSQGRTSGPSVLNGPAVGPLNTPQP) is disordered. The region spanning 273–509 (TSKQLIERIM…DLLLEMLDAH (237 aa)) is the NR LBD domain. The tract at residues 514-559 (SRLPRRSPQQETVEQCDAPARPHSPGTSGPTNTWTPSCTGGRGEPQ) is disordered. Residues 538-551 (PGTSGPTNTWTPSC) are compositionally biased toward polar residues.

The protein belongs to the nuclear hormone receptor family. NR3 subfamily. Binds DNA as a homodimer. Can form a heterodimer with ER-alpha.

The protein localises to the nucleus. In terms of biological role, binds estrogens with an affinity similar to that of ER-alpha, and activates expression of reporter genes containing estrogen response elements (ERE) in an estrogen-dependent manner. The polypeptide is Estrogen receptor beta (esr2) (Sparus aurata (Gilthead sea bream)).